Here is a 150-residue protein sequence, read N- to C-terminus: MQIILLEKVANLGNLGDIVKVKDGYARNFLIPNRKARRATKEAIAEFEVRRAELEKVAAEKLAASQAVGEKLNGQSFEITQKSGVDGRLFGSVTNGDIAELLKKAGYEVEKLQVRMPEGPLKMIGEHTVQVALHTDVVVDVTINVIGDHA.

The protein belongs to the bacterial ribosomal protein bL9 family.

Its function is as follows. Binds to the 23S rRNA. The protein is Large ribosomal subunit protein bL9 of Burkholderia ambifaria (strain MC40-6).